A 2535-amino-acid polypeptide reads, in one-letter code: Piezo-type mechanosensitive ion channel component 1 (2535 aa).

The next 3 membrane-spanning stretches (helical) occupy residues 13 to 25, 29 to 44, and 59 to 81; these read LLLP…ASLL, ALSL…LPWL, and LLRA…QICL. Asn-100 carries an N-linked (GlcNAc...) asparagine glycan. Helical transmembrane passes span 122–138, 193–212, 215–234, 246–266, and 308–328; these read VAPD…CLGL, LLVT…AGIA, SAFS…WWSC, LCVM…CYQT, and WPIY…TSLL. The span at 346-357 shows a compositional bias: acidic residues; the sequence is DEEHELELDQLE. The tract at residues 346-377 is disordered; it reads DEEHELELDQLEPEPQARGTTQGATPTTTGPD. The span at 358 to 376 shows a compositional bias: low complexity; it reads PEPQARGTTQGATPTTTGP. Asn-380 carries N-linked (GlcNAc...) asparagine glycosylation. A run of 8 helical transmembrane segments spans residues 416–436, 439–454, 460–482, 510–527, 572–592, 594–614, 625–646, and 677–693; these read LILD…SIMY, WLTF…IWTV, LAML…RYVW, CLDL…WLLL, IYVK…SFAG, LVVY…LFQV, VFWW…TFQF, and LFSS…ACIL. Ser-749 bears the Phosphoserine mark. 12 helical membrane-spanning segments follow: residues 803–814, 818–831, 846–860, 913–940, 981–996, 999–1014, 1028–1043, 1083–1104, 1140–1166, 1172–1190, 1204–1222, and 1272–1288; these read LVALYTVWVALK, VMNL…AFAL, VWTC…LYQL, GYIQ…HYRR, GLEI…IGQR, FMVI…ILTR, CLFL…LLCL, TNLI…VFSA, YLDM…TGAT, GLGY…TTLL, LILY…SLLS, and IWDS…RRVF. Residues 1325 to 1356 adopt a coiled-coil conformation; it reads HRQTEERSLAQLKRQMKRIRAKQEKYRQSQAS. 2 disordered regions span residues 1345-1383 and 1556-1597; these read AKQE…RTQW and SGPV…NTRS. The span at 1352 to 1365 shows a compositional bias: polar residues; sequence QSQASRGQLQSTDP. Residues Ser-1372 and Ser-1377 each carry the phosphoserine modification. Residues 1579 to 1597 are compositionally biased toward polar residues; the sequence is SSMTDDTGSPLSTGYNTRS. A phosphoserine mark is found at Ser-1614, Ser-1618, and Ser-1633. 4 consecutive transmembrane segments (helical) span residues 1644–1687, 1692–1707, 1716–1734, and 1767–1788; these read PELE…LNHM, AASL…WAML, FWMT…KYLF, and DSYI…SQLL. Composition is skewed to basic and acidic residues over residues 1801–1811 and 1842–1867; these read PKDHCRSSEKD and PKDH…DLKP. The tract at residues 1801-1911 is disordered; sequence PKDHCRSSEK…GREAAGRKRL (111 aa). A compositionally biased stretch (basic residues) spans 1868 to 1881; sequence QHRRHISIRFRRRK. The next 5 membrane-spanning stretches (helical) occupy residues 1965–1984, 2005–2021, 2036–2056, 2065–2080, and 2181–2201; these read YALM…FGFW, PQAF…TMVI, AFQV…LPAV, AVAQ…YFAL, and GLII…MSLI. A disulfide bridge connects residues Cys-2425 and Cys-2429. Residues 2446–2466 form a helical membrane-spanning segment; sequence LGFLAGYGIVGLYVSIVLVVG.

The protein belongs to the PIEZO (TC 1.A.75) family. As to quaternary structure, homotrimer; the homotrimer forms a propeller-shaped Piezo channel with a cation-ion conducting pore. Heterotrimeric interaction may occur between PIEZO1 and PIEZO2. Interacts with PKD2. Interacts with STOM13. Interacts with TMC1, TMC2, PCDH15 and CIB2; the interaction may be part of the MET complex. Interacts with MDFIC (via C-terminus); the interaction prolongs Piezo channel inactivation. Interacts with MDFI (via C-terminus); the interaction prolongs Piezo channel inactivation. In terms of tissue distribution, moderate expression in lung and kidney. Very weak expression in heart, spleen and liver.

The protein localises to the endoplasmic reticulum membrane. It localises to the endoplasmic reticulum-Golgi intermediate compartment membrane. The protein resides in the cell membrane. It is found in the cell projection. Its subcellular location is the lamellipodium membrane. It carries out the reaction K(+)(in) = K(+)(out). The enzyme catalyses Na(+)(in) = Na(+)(out). It catalyses the reaction Ca(2+)(in) = Ca(2+)(out). The catalysed reaction is Mg(2+)(in) = Mg(2+)(out). With respect to regulation, regulated by auxillary subunits MDFIC and MDFI. Down-regulated by phosphatidylserines exposed on the cell surface. Divalent ions decrease the single-channel permeability of K(+). In terms of biological role, pore-forming subunit of the mechanosensitive non-specific cation Piezo channel required for rapidly adapting mechanically activated (MA) currents and has a key role in sensing touch and tactile pain. Piezo channels are homotrimeric three-blade propeller-shaped structures that utilize a cap-motion and plug-and-latch mechanism to gate their ion-conducting pathways. Generates currents characterized by a linear current-voltage relationship that are sensitive to ruthenium red and gadolinium. Conductance to monovalent alkali ions is highest for K(+), intermediate for Na(+) and lowest for Li(+). Divalent ions except for Mn(2+) permeate the channel but more slowly than the monovalent ions and they also reduce K(+) currents. Plays a key role in epithelial cell adhesion by maintaining integrin activation through R-Ras recruitment to the ER, most probably in its activated state, and subsequent stimulation of calpain signaling. In inner ear hair cells, PIEZO1/2 subunits may constitute part of the mechanotransducer (MET) non-selective cation channel complex where they may act as pore-forming ion-conducting component in the complex. In the kidney, may contribute to the detection of intraluminal pressure changes and to urine flow sensing. Acts as a shear-stress sensor that promotes endothelial cell organization and alignment in the direction of blood flow through calpain activation. Plays a key role in blood vessel formation and vascular structure in both development and adult physiology. Acts as a sensor of phosphatidylserine (PS) flipping at the plasma membrane and governs morphogenesis of muscle cells. In myoblasts, flippase-mediated PS enrichment at the inner leaflet of plasma membrane triggers channel activation and Ca(2+) influx followed by Rho GTPases signal transduction, leading to assembly of cortical actomyosin fibers and myotube formation. This Rattus norvegicus (Rat) protein is Piezo-type mechanosensitive ion channel component 1 (Piezo1).